Consider the following 734-residue polypeptide: Photosystem I P700 chlorophyll a apoprotein A2 (734 aa).

8 consecutive transmembrane segments (helical) span residues 46–69 (IFAS…FHVA), 135–158 (LYTG…LHLQ), 175–199 (LNHH…HVAI), 273–291 (IAHH…GHMY), 330–353 (LHFQ…QHMY), 369–395 (AALY…IFFI), 417–439 (AIIS…LYVH), and 517–535 (FLVH…LILV). [4Fe-4S] cluster-binding residues include C559 and C568. 2 helical membrane passes run 575-596 (AFYL…YWHW) and 643-665 (LSVW…MFLI). Chlorophyll a-binding residues include H654, M662, and Y670. W671 is a phylloquinone binding site. The helical transmembrane segment at 707–727 (LVGLAHFSVGYIFTYAAFLIA) threads the bilayer.

This sequence belongs to the PsaA/PsaB family. In terms of assembly, the PsaA/B heterodimer binds the P700 chlorophyll special pair and subsequent electron acceptors. PSI consists of a core antenna complex that captures photons, and an electron transfer chain that converts photonic excitation into a charge separation. The eukaryotic PSI reaction center is composed of at least 11 subunits. P700 is a chlorophyll a/chlorophyll a' dimer, A0 is one or more chlorophyll a, A1 is one or both phylloquinones and FX is a shared 4Fe-4S iron-sulfur center. serves as cofactor.

The protein localises to the plastid. It is found in the chloroplast thylakoid membrane. The catalysed reaction is reduced [plastocyanin] + hnu + oxidized [2Fe-2S]-[ferredoxin] = oxidized [plastocyanin] + reduced [2Fe-2S]-[ferredoxin]. PsaA and PsaB bind P700, the primary electron donor of photosystem I (PSI), as well as the electron acceptors A0, A1 and FX. PSI is a plastocyanin-ferredoxin oxidoreductase, converting photonic excitation into a charge separation, which transfers an electron from the donor P700 chlorophyll pair to the spectroscopically characterized acceptors A0, A1, FX, FA and FB in turn. Oxidized P700 is reduced on the lumenal side of the thylakoid membrane by plastocyanin. The sequence is that of Photosystem I P700 chlorophyll a apoprotein A2 from Coffea arabica (Arabian coffee).